The primary structure comprises 354 residues: Guanine nucleotide-binding protein alpha-3 subunit (354 aa).

G2 is lipidated: N-myristoyl glycine. The S-palmitoyl cysteine moiety is linked to residue C4. The 323-residue stretch at 32–354 folds into the G-alpha domain; that stretch reads KVVKLLLLGA…QANLQGCGLY (323 aa). The tract at residues 35 to 48 is G1 motif; that stretch reads KLLLLGAGECGKST. GTP contacts are provided by residues 40–47, 176–182, 201–205, 270–273, and A326; these read GAGECGKS, LLSRIKT, DVGGQ, and NKKD. Mg(2+) is bound by residues S47 and T182. The segment at 174–182 is G2 motif; it reads DILLSRIKT. The interval 197-206 is G3 motif; the sequence is FRVFDVGGQR. Positions 266-273 are G4 motif; that stretch reads ILFLNKKD. Residues 324–329 are G5 motif; it reads TCATDT.

Belongs to the G-alpha family. G(q) subfamily. In terms of assembly, g proteins are composed of 3 units; alpha, beta and gamma. The alpha chain contains the guanine nucleotide binding site.

In terms of biological role, guanine nucleotide-binding proteins (G proteins) are involved as modulators or transducers in various transmembrane signaling systems. Promotes transcription of 3',5'-cyclic phosphodiesterases pde-1 and pde-5, leading to reduced cGMP levels in sensory neurons. This causes suppression of insulin production and signaling which leads to increased daf-16 activity and contributes to increased adult lifespan and resistance to oxidative stress. In addition, by reducing cGMP levels, inhibits TGF-beta signaling pathways. Involved in behavioral response to P.aeruginosa by controlling the expression of daf-7, a member of the TGF-beta family, in ASJ sensory neurons. This is Guanine nucleotide-binding protein alpha-3 subunit (gpa-3) from Caenorhabditis briggsae.